The primary structure comprises 342 residues: Dihydroorotase (342 aa).

H13 and H15 together coordinate Zn(2+). Residues 15 to 17 and N41 contribute to the substrate site; that span reads HLR. 3 residues coordinate Zn(2+): K98, H135, and H173. Position 98 is an N6-carboxylysine (K98). Position 135 (H135) interacts with substrate. L218 serves as a coordination point for substrate. Residue D246 participates in Zn(2+) binding. Residue D246 is part of the active site. Substrate contacts are provided by H250 and A262.

This sequence belongs to the metallo-dependent hydrolases superfamily. DHOase family. Class II DHOase subfamily. Homodimer. Zn(2+) is required as a cofactor.

The catalysed reaction is (S)-dihydroorotate + H2O = N-carbamoyl-L-aspartate + H(+). It functions in the pathway pyrimidine metabolism; UMP biosynthesis via de novo pathway; (S)-dihydroorotate from bicarbonate: step 3/3. In terms of biological role, catalyzes the reversible cyclization of carbamoyl aspartate to dihydroorotate. In Vibrio vulnificus (strain CMCP6), this protein is Dihydroorotase.